Here is a 429-residue protein sequence, read N- to C-terminus: Bifunctional phosphoribosylaminoimidazole carboxylase/phosphoribosylaminoimidazole succinocarboxamide synthetase (429 aa).

The SAICAR synthetase stretch occupies residues 7–264 (ASIEGYKLGK…WVAEQLADIV (258 aa)). Residues 7-264 (ASIEGYKLGK…WVAEQLADIV (258 aa)) form an SAICAR synthetase domain region. The segment at 265-429 (PKKDHLVVIL…DKELRGVRNA (165 aa)) is AIR carboxylase. The AIR carboxylase domain stretch occupies residues 270-429 (LVVILMGSAS…DKELRGVRNA (160 aa)). Ser335 is a binding site for CO2.

In the N-terminal section; belongs to the SAICAR synthetase family. It in the C-terminal section; belongs to the AIR carboxylase family. Class II subfamily. As to quaternary structure, homooctamer.

The catalysed reaction is 5-amino-1-(5-phospho-D-ribosyl)imidazole-4-carboxylate + L-aspartate + ATP = (2S)-2-[5-amino-1-(5-phospho-beta-D-ribosyl)imidazole-4-carboxamido]succinate + ADP + phosphate + 2 H(+). The enzyme catalyses 5-amino-1-(5-phospho-D-ribosyl)imidazole-4-carboxylate + H(+) = 5-amino-1-(5-phospho-beta-D-ribosyl)imidazole + CO2. It participates in purine metabolism; IMP biosynthesis via de novo pathway; 5-amino-1-(5-phospho-D-ribosyl)imidazole-4-carboxamide from 5-amino-1-(5-phospho-D-ribosyl)imidazole-4-carboxylate: step 1/2. It functions in the pathway purine metabolism; IMP biosynthesis via de novo pathway; 5-amino-1-(5-phospho-D-ribosyl)imidazole-4-carboxylate from 5-amino-1-(5-phospho-D-ribosyl)imidazole (carboxylase route): step 1/1. Bifunctional phosphoribosylaminoimidazole carboxylase and phosphoribosylaminoimidazole succinocarboxamide synthetase catalyzing two reactions of the de novo purine biosynthetic pathway. The chain is Bifunctional phosphoribosylaminoimidazole carboxylase/phosphoribosylaminoimidazole succinocarboxamide synthetase from Drosophila melanogaster (Fruit fly).